Reading from the N-terminus, the 270-residue chain is Formamidopyrimidine-DNA glycosylase (270 aa).

Catalysis depends on P2, which acts as the Schiff-base intermediate with DNA. The active-site Proton donor is E3. The active-site Proton donor; for beta-elimination activity is K57. Residues H90, R109, and K150 each contribute to the DNA site. An FPG-type zinc finger spans residues 235–269 (QIYGKKGCPCPKCGQKIESFTVGQRNSYVCLHCQK). The active-site Proton donor; for delta-elimination activity is the R259.

Belongs to the FPG family. Monomer. It depends on Zn(2+) as a cofactor.

It carries out the reaction Hydrolysis of DNA containing ring-opened 7-methylguanine residues, releasing 2,6-diamino-4-hydroxy-5-(N-methyl)formamidopyrimidine.. It catalyses the reaction 2'-deoxyribonucleotide-(2'-deoxyribose 5'-phosphate)-2'-deoxyribonucleotide-DNA = a 3'-end 2'-deoxyribonucleotide-(2,3-dehydro-2,3-deoxyribose 5'-phosphate)-DNA + a 5'-end 5'-phospho-2'-deoxyribonucleoside-DNA + H(+). Involved in base excision repair of DNA damaged by oxidation or by mutagenic agents. Acts as a DNA glycosylase that recognizes and removes damaged bases. Has a preference for oxidized purines, such as 7,8-dihydro-8-oxoguanine (8-oxoG). Has AP (apurinic/apyrimidinic) lyase activity and introduces nicks in the DNA strand. Cleaves the DNA backbone by beta-delta elimination to generate a single-strand break at the site of the removed base with both 3'- and 5'-phosphates. This is Formamidopyrimidine-DNA glycosylase from Actinobacillus succinogenes (strain ATCC 55618 / DSM 22257 / CCUG 43843 / 130Z).